The primary structure comprises 361 residues: 3-dehydroquinate synthase (361 aa).

NAD(+)-binding positions include 72–77, 130–131, lysine 142, and lysine 151; these read SGEKEK and TT. Residues glutamate 184, histidine 247, and histidine 264 each contribute to the Zn(2+) site.

It belongs to the sugar phosphate cyclases superfamily. Dehydroquinate synthase family. NAD(+) serves as cofactor. The cofactor is Co(2+). Zn(2+) is required as a cofactor.

The protein resides in the cytoplasm. It catalyses the reaction 7-phospho-2-dehydro-3-deoxy-D-arabino-heptonate = 3-dehydroquinate + phosphate. Its pathway is metabolic intermediate biosynthesis; chorismate biosynthesis; chorismate from D-erythrose 4-phosphate and phosphoenolpyruvate: step 2/7. Functionally, catalyzes the conversion of 3-deoxy-D-arabino-heptulosonate 7-phosphate (DAHP) to dehydroquinate (DHQ). This is 3-dehydroquinate synthase from Bacillus cereus (strain ATCC 14579 / DSM 31 / CCUG 7414 / JCM 2152 / NBRC 15305 / NCIMB 9373 / NCTC 2599 / NRRL B-3711).